The sequence spans 393 residues: Beta-ureidopropionase (393 aa).

Residues Val-72–Leu-344 form the CN hydrolase domain. Glu-119 functions as the Proton acceptor in the catalytic mechanism. The Proton donor role is filled by Lys-196. Cys-233 functions as the Nucleophile in the catalytic mechanism. Ser-378 bears the Phosphoserine mark.

It belongs to the carbon-nitrogen hydrolase superfamily. BUP family. In terms of assembly, homodimer, homotetramer, homooctamer; can also form higher homooligomers. In terms of processing, the N-terminus is blocked. In terms of tissue distribution, detected in liver (at protein level).

It localises to the cytoplasm. The enzyme catalyses 3-(carbamoylamino)propanoate + H2O + 2 H(+) = beta-alanine + NH4(+) + CO2. It catalyses the reaction 3-(carbamoylamino)-2-methylpropanoate + H2O + 2 H(+) = (R)-3-amino-2-methylpropanoate + NH4(+) + CO2. Its pathway is amino-acid biosynthesis; beta-alanine biosynthesis. Its activity is regulated as follows. Allosteric enzyme with positive cooperativity toward the substrate N-carbamoyl-beta-alanine at low substrate concentrations (below 12 nM). Displays no cooperativity at substrate levels above 12 nM. Functionally, catalyzes a late step in pyrimidine degradation. Converts N-carbamoyl-beta-alanine (3-ureidopropanoate) into beta-alanine, ammonia and carbon dioxide. Likewise, converts N-carbamoyl-beta-aminoisobutyrate (3-ureidoisobutyrate) into beta-aminoisobutyrate, ammonia and carbon dioxide. The protein is Beta-ureidopropionase (Upb1) of Rattus norvegicus (Rat).